A 490-amino-acid chain; its full sequence is Glycogen synthase kinase-3 alpha (490 aa).

Residues 1–15 (MSGGGPSGGGPGGSG) are compositionally biased toward gly residues. The interval 1–97 (MSGGGPSGGG…PPGVKLGRDS (97 aa)) is disordered. At serine 2 the chain carries N-acetylserine. Serine 2 bears the Phosphoserine mark. The residue at position 21 (serine 21) is a Phosphoserine; by PKB/AKT1. Residues 25–82 (PGGGGGGGGGGPGGSASGPGGTGGGKASVGAMGGGVGASSSGGGPSGSGGGGSGGPGA) are compositionally biased toward gly residues. Serine 72, serine 77, and serine 97 each carry phosphoserine. Residues 119 to 404 (YTDIKVIGNG…PLEACAHSFF (286 aa)) enclose the Protein kinase domain. ATP is bound by residues 125 to 133 (IGNGSFGVV) and lysine 148. The active-site Proton acceptor is aspartate 244. Position 279 is a phosphotyrosine (tyrosine 279). Positions 451–490 (GPASPLTTSYNPSSQALTEAQTGQDWQPSDATTATLASSS) are disordered. Polar residues predominate over residues 455–480 (PLTTSYNPSSQALTEAQTGQDWQPSD). Over residues 481–490 (ATTATLASSS) the composition is skewed to low complexity.

Belongs to the protein kinase superfamily. CMGC Ser/Thr protein kinase family. GSK-3 subfamily. Monomer. Interacts with AXIN1 and CTNNB1/beta-catenin. Interacts with ARRB2. Interacts with CTNND2. Interacts with LMBR1L. Interacts with DDX3X. Interacts with TNFRSF10B. Post-translationally, phosphorylated by AKT1 at Ser-21: upon insulin-mediated signaling, the activated PKB/AKT1 protein kinase phosphorylates and deactivates GSK3A, resulting in the dephosphorylation and activation of GYS1. Activated by phosphorylation at Tyr-279.

It catalyses the reaction L-seryl-[tau protein] + ATP = O-phospho-L-seryl-[tau protein] + ADP + H(+). It carries out the reaction L-threonyl-[tau protein] + ATP = O-phospho-L-threonyl-[tau protein] + ADP + H(+). The catalysed reaction is L-seryl-[protein] + ATP = O-phospho-L-seryl-[protein] + ADP + H(+). The enzyme catalyses L-threonyl-[protein] + ATP = O-phospho-L-threonyl-[protein] + ADP + H(+). Activated by phosphorylation at Tyr-279. In response to insulin, inhibited by phosphorylation at Ser-21 by PKB/AKT1; phosphorylation at this site causes a conformational change, preventing access of substrates to the active site. Inhibited by lithium. Constitutively active protein kinase that acts as a negative regulator in the hormonal control of glucose homeostasis, Wnt signaling and regulation of transcription factors and microtubules, by phosphorylating and inactivating glycogen synthase (GYS1 or GYS2), CTNNB1/beta-catenin, APC and AXIN1. Requires primed phosphorylation of the majority of its substrates. Contributes to insulin regulation of glycogen synthesis by phosphorylating and inhibiting GYS1 activity and hence glycogen synthesis. Regulates glycogen metabolism in liver, but not in muscle. May also mediate the development of insulin resistance by regulating activation of transcription factors. In Wnt signaling, regulates the level and transcriptional activity of nuclear CTNNB1/beta-catenin. Facilitates amyloid precursor protein (APP) processing and the generation of APP-derived amyloid plaques found in Alzheimer disease. May be involved in the regulation of replication in pancreatic beta-cells. Is necessary for the establishment of neuronal polarity and axon outgrowth. Through phosphorylation of the anti-apoptotic protein MCL1, may control cell apoptosis in response to growth factors deprivation. Acts as a regulator of autophagy by mediating phosphorylation of KAT5/TIP60 under starvation conditions, activating KAT5/TIP60 acetyltransferase activity and promoting acetylation of key autophagy regulators, such as ULK1 and RUBCNL/Pacer. Negatively regulates extrinsic apoptotic signaling pathway via death domain receptors. Promotes the formation of an anti-apoptotic complex, made of DDX3X, BRIC2 and GSK3B, at death receptors, including TNFRSF10B. The anti-apoptotic function is most effective with weak apoptotic signals and can be overcome by stronger stimulation. In Mus musculus (Mouse), this protein is Glycogen synthase kinase-3 alpha (Gsk3a).